A 277-amino-acid polypeptide reads, in one-letter code: Uridine-cytidine kinase 1 (277 aa).

24–32 (GGTASGKST) is a binding site for ATP. Residues aspartate 81, tyrosine 109, histidine 114, arginine 163, arginine 172, and glutamine 180 each contribute to the substrate site. An ATP-binding site is contributed by aspartate 209. Residues 241–277 (NHGRSLKRGVAEHGENPSGSSSNLTKRPLLEPSTRPH) form a disordered region.

It belongs to the uridine kinase family.

The catalysed reaction is uridine + ATP = UMP + ADP + H(+). The enzyme catalyses cytidine + ATP = CMP + ADP + H(+). The protein operates within pyrimidine metabolism; CTP biosynthesis via salvage pathway; CTP from cytidine: step 1/3. It participates in pyrimidine metabolism; UMP biosynthesis via salvage pathway; UMP from uridine: step 1/1. In terms of biological role, phosphorylates uridine and cytidine to uridine monophosphate and cytidine monophosphate. Does not phosphorylate deoxyribonucleosides or purine ribonucleosides. Can use ATP or GTP as a phosphate donor. In Danio rerio (Zebrafish), this protein is Uridine-cytidine kinase 1 (uck1).